A 1420-amino-acid chain; its full sequence is Putative mediator of RNA polymerase II transcription subunit 14 (1420 aa).

Residues 1-43 (MDQNQQQQQQQQQQQQQQQQQQQQQQQQQQQQQQQQQQQQQQQ) are a coiled coil. 2 stretches are compositionally biased toward low complexity: residues 1–43 (MDQN…QQQQ) and 449–474 (TTSSSSSSSSNNNNTASPIINRNNNN). Disordered regions lie at residues 1 to 59 (MDQN…TTPI), 449 to 490 (TTSS…NPLS), 750 to 799 (QQDI…GYKN), and 1389 to 1420 (QQQQQQQQQQQQQQQQQQIENNNFASASSSIR). The span at 475 to 490 (GKPNLLSTKQSNNPLS) shows a compositional bias: polar residues. Low complexity-rich tracts occupy residues 755 to 795 (NNNN…NGNN) and 1389 to 1406 (QQQQQQQQQQQQQQQQQQ). Residues 1382 to 1412 (LLIQQQQQQQQQQQQQQQQQQQQQQIENNNF) are a coiled coil. Positions 1407-1420 (IENNNFASASSSIR) are enriched in polar residues.

Belongs to the Mediator complex subunit 14 family. As to quaternary structure, component of the Mediator complex.

It localises to the nucleus. Its function is as follows. Component of the Mediator complex, a coactivator involved in the regulated transcription of nearly all RNA polymerase II-dependent genes. Mediator functions as a bridge to convey information from gene-specific regulatory proteins to the basal RNA polymerase II transcription machinery. Mediator is recruited to promoters by direct interactions with regulatory proteins and serves as a scaffold for the assembly of a functional preinitiation complex with RNA polymerase II and the general transcription factors. This chain is Putative mediator of RNA polymerase II transcription subunit 14 (med14), found in Dictyostelium discoideum (Social amoeba).